Consider the following 521-residue polypeptide: Vang-like protein 2 (521 aa).

Residues 1 to 81 (MDTESQYSGY…TTVVTGTSEH (81 aa)) form a disordered region. At 1-108 (MDTESQYSGY…VPLDCSRHLG (108 aa)) the chain is on the cytoplasmic side. Over residues 15–33 (GHSRSSRKHRDRRDRHRSK) the composition is skewed to basic residues. Over residues 57-67 (ESTRGDERDDN) the composition is skewed to basic and acidic residues. The segment covering 69–81 (GETTTVVTGTSEH) has biased composition (low complexity). Residues 109-129 (VAAGAILALLSFLTPLAFLLL) traverse the membrane as a helical segment. The Extracellular portion of the chain corresponds to 130 to 147 (PPLLWREELEPCGTACEG). A helical transmembrane segment spans residues 148-168 (LFISVAFKLLILLLGSWALFF). The Cytoplasmic portion of the chain corresponds to 169-178 (RRPKASLPRV). The helical transmembrane segment at 179-199 (FVLRALLMVLVFLLVISYWLF) threads the bilayer. Residues 200–217 (YGVRILDARERSYQGVVQ) are Extracellular-facing. Residues 218–238 (FAVSLVDALLFVHYLAVVLLE) form a helical membrane-spanning segment. Topologically, residues 239–521 (LRQLQPQFTL…VMRLQSETSV (283 aa)) are cytoplasmic.

The protein belongs to the Vang family. In terms of assembly, homodimer and heterodimer with Vangl1. Interacts through its C-terminal region with the N-terminal half of DVL1, DVL2 and DVL3. The PDZ domain of DVL1, DVL2 and DVL3 is required for the interaction. Variants Glu-255 and Asn-464 impair interaction with the DVL proteins. Also interacts with the PDZ domains of MAGI3, SCRIB/SCRB1 and FZD3. Interacts with PRICKLE3. As to expression, primarily expressed in the brain and epididymis. Not detected in the cochlea of Lp mice.

The protein resides in the cell membrane. In terms of biological role, involved in the control of early morphogenesis and patterning of both axial midline structures and the development of neural plate. Plays a role in the regulation of planar cell polarity, particularly in the orientation of stereociliary bundles in the cochlea. Required for polarization and movement of myocardializing cells in the outflow tract and seems to act via RHOA signaling to regulate this process. Required for cell surface localization of FZD3 and FZD6 in the inner ear. In Mus musculus (Mouse), this protein is Vang-like protein 2 (Vangl2).